The chain runs to 68 residues: Riparin-1.5 amide (68 aa).

Residues 1–15 form the signal peptide; it reads MKIIVVLAVLMLVSA. A propeptide spanning residues 16 to 41 is cleaved from the precursor; the sequence is QVCLVSAAEMGHSSDNELSSRDLVKR. An intrachain disulfide couples Cys-47 to Cys-53. Cys-53 carries the cysteine amide modification. Positions 57 to 68 are excised as a propeptide; that stretch reads SIESSEGANGGE.

As to expression, expressed by the skin glands.

It localises to the secreted. The sequence is that of Riparin-1.5 amide from Crinia riparia (Streambank froglet).